Consider the following 388-residue polypeptide: MLPSPSVHMASPPPSLNMASHPPSPATASRKRFQDSSKKIMNPSFADLPSSLIEEIMLLLVLKDNIRASAACKSWYEAGVSVRVVDKHPWLMCFPKRGNLFEFRDPLHWKLHTLDLPELAESTVCYSRFGWLLMRKASSNDVFFFNPFSRDIISLPMCELDFQQIAFSCPPTSDDCVLLAIKFVPGEVNRVTVSTCNPGATKWITNDFPTFLRLFYMQSNLVYRRDRFYCFNAEGTLYSFEPSYREWSYICADKLRCPYVHENQYMWCGKAVFLVEKKGELFVMFTCSNEKPMVYKLFSMKWKELSRTTLDGMTFFVSFYNSELRNNLPWMRNNVYFSRFGYNRKHCVSFSFDESRYNTPKEWEQWVELCPPQSLWIDTPKNVLDYFL.

The segment at 1–30 (MLPSPSVHMASPPPSLNMASHPPSPATASR) is disordered. Residues 42–88 (NPSFADLPSSLIEEIMLLLVLKDNIRASAACKSWYEAGVSVRVVDKH) enclose the F-box domain.

The polypeptide is F-box protein At4g00893 (Arabidopsis thaliana (Mouse-ear cress)).